The chain runs to 803 residues: Homeobox protein Wariai (803 aa).

The span at 23-41 shows a compositional bias: polar residues; sequence SDYDSYEQQYNNPTGSKQY. Residues 23–144 are disordered; sequence SDYDSYEQQY…PTPYSSNSFS (122 aa). The span at 42-124 shows a compositional bias: low complexity; sequence NNNNNNNTNT…NNNNNNNNNN (83 aa). Residues 125-138 show a composition bias toward polar residues; that stretch reads QHLSQSQQLSPTPY. The homeobox DNA-binding region spans 162–221; the sequence is SKKKRKRTSPDQLKLLEKIFMAHQHPNLNLRSQLAVELHMTARSVQIWFQNRRAKARNME. Positions 288-330 are disordered; sequence INGNMGGGGGGGGGSHNHHHHNHNHNHHNHNHNHNHNQPLSNG. Positions 291–302 are enriched in gly residues; sequence NMGGGGGGGGGS. Basic residues predominate over residues 303–322; the sequence is HNHHHHNHNHNHHNHNHNHN. 9 ANK repeats span residues 374–403, 407–436, 440–469, 474–503, 507–536, 540–569, 573–602, 606–636, and 642–671; these read KGLS…NPNI, QGNT…DPNL, EGVS…EVSV, NGET…KASV, NNRT…DMNA, DGHT…DPNI, EGYT…KLNI, NGQN…EIAA, and QGYT…SKKI. A disordered region spans residues 695-760; it reads KSSNNNNSNS…PPGNKFEEDD (66 aa). A compositionally biased stretch (low complexity) spans 696-746; it reads SSNNNNSNSNINNINNINNINNINSQPNTNSDNNNNNNNNNFNENYSNGNN.

The protein localises to the nucleus. In terms of biological role, putative transcription factor, that seems to be involved in anterior-posterior patterning of the slug, probably by controlling the proportions of prestalk and prespore cells. In Dictyostelium discoideum (Social amoeba), this protein is Homeobox protein Wariai (warA).